Reading from the N-terminus, the 237-residue chain is Purine nucleoside phosphorylase DeoD-type (237 aa).

Position 4 (His-4) interacts with a purine D-ribonucleoside. Phosphate contacts are provided by residues Gly-20, Arg-24, Arg-43, and 87-90 (RVGT). A purine D-ribonucleoside is bound by residues 179–181 (EME) and 203–204 (SD). Catalysis depends on Asp-204, which acts as the Proton donor.

The protein belongs to the PNP/UDP phosphorylase family. Homohexamer; trimer of homodimers.

The enzyme catalyses a purine D-ribonucleoside + phosphate = a purine nucleobase + alpha-D-ribose 1-phosphate. It carries out the reaction a purine 2'-deoxy-D-ribonucleoside + phosphate = a purine nucleobase + 2-deoxy-alpha-D-ribose 1-phosphate. Catalyzes the reversible phosphorolytic breakdown of the N-glycosidic bond in the beta-(deoxy)ribonucleoside molecules, with the formation of the corresponding free purine bases and pentose-1-phosphate. In Exiguobacterium sp. (strain ATCC BAA-1283 / AT1b), this protein is Purine nucleoside phosphorylase DeoD-type.